The primary structure comprises 235 residues: MGRAFEYRRAAKEARWDKMSKVFPKLAKAITVAAKEGGVEPDMNPKLRAAIAAAKAENMPKDNIDAAIKRANGKDSADIKTIFYDGKAAHGVQIIVECATDNPTRTVANVKAIFSKNGGEVLPSGSLSFMFSRKSVFELNKPTTDIEEVELELIDFGLSDIELEDDTLYVYGDYTSFGTLHEGIEKLGLEVKKGTLQYIPNSTITLSEEQMQEVERLLDKLEDDDDVQAVYTNIE.

This sequence belongs to the TACO1 family.

It localises to the cytoplasm. This chain is Probable transcriptional regulatory protein Ccur92_05350, found in Campylobacter curvus (strain 525.92).